The following is a 332-amino-acid chain: Ferredoxin--NADP reductase 2 (332 aa).

FAD contacts are provided by E37, Q45, Y50, V90, F124, D285, and T326.

It belongs to the ferredoxin--NADP reductase type 2 family. Homodimer. It depends on FAD as a cofactor.

It catalyses the reaction 2 reduced [2Fe-2S]-[ferredoxin] + NADP(+) + H(+) = 2 oxidized [2Fe-2S]-[ferredoxin] + NADPH. The chain is Ferredoxin--NADP reductase 2 from Bacillus licheniformis (strain ATCC 14580 / DSM 13 / JCM 2505 / CCUG 7422 / NBRC 12200 / NCIMB 9375 / NCTC 10341 / NRRL NRS-1264 / Gibson 46).